The sequence spans 154 residues: Large ribosomal subunit protein uL15 (154 aa).

The interval 17–44 (KRVGRGIGSGTGKTGGRGVKGQRSRSGV) is disordered. Gly residues predominate over residues 21–35 (RGIGSGTGKTGGRGV).

It belongs to the universal ribosomal protein uL15 family. In terms of assembly, part of the 50S ribosomal subunit.

In terms of biological role, binds to the 23S rRNA. The protein is Large ribosomal subunit protein uL15 of Bartonella henselae (strain ATCC 49882 / DSM 28221 / CCUG 30454 / Houston 1) (Rochalimaea henselae).